Consider the following 155-residue polypeptide: Large ribosomal subunit protein eL24B (155 aa).

Ser-7 is subject to Phosphoserine. Residues 66-155 (EVAKKRSRKT…AFQKVAATSR (90 aa)) form a disordered region. Positions 89 to 129 (LIKERRSLKPEVRKANREEKLKANKEKKRAEKAARKAEKAK) are enriched in basic and acidic residues.

This sequence belongs to the eukaryotic ribosomal protein eL24 family. In terms of assembly, component of the large ribosomal subunit (LSU). Mature yeast ribosomes consist of a small (40S) and a large (60S) subunit. The 40S small subunit contains 1 molecule of ribosomal RNA (18S rRNA) and 33 different proteins (encoded by 57 genes). The large 60S subunit contains 3 rRNA molecules (25S, 5.8S and 5S rRNA) and 46 different proteins (encoded by 81 genes).

It localises to the cytoplasm. Component of the ribosome, a large ribonucleoprotein complex responsible for the synthesis of proteins in the cell. The small ribosomal subunit (SSU) binds messenger RNAs (mRNAs) and translates the encoded message by selecting cognate aminoacyl-transfer RNA (tRNA) molecules. The large subunit (LSU) contains the ribosomal catalytic site termed the peptidyl transferase center (PTC), which catalyzes the formation of peptide bonds, thereby polymerizing the amino acids delivered by tRNAs into a polypeptide chain. The nascent polypeptides leave the ribosome through a tunnel in the LSU and interact with protein factors that function in enzymatic processing, targeting, and the membrane insertion of nascent chains at the exit of the ribosomal tunnel. This chain is Large ribosomal subunit protein eL24B, found in Saccharomyces cerevisiae (strain ATCC 204508 / S288c) (Baker's yeast).